Consider the following 309-residue polypeptide: tRNA dimethylallyltransferase (309 aa).

13 to 20 (GPTGAGKT) provides a ligand contact to ATP. 15 to 20 (TGAGKT) serves as a coordination point for substrate. Interaction with substrate tRNA stretches follow at residues 38 to 41 (DSRQ) and 162 to 166 (QRVTR).

The protein belongs to the IPP transferase family. As to quaternary structure, monomer. It depends on Mg(2+) as a cofactor.

It carries out the reaction adenosine(37) in tRNA + dimethylallyl diphosphate = N(6)-dimethylallyladenosine(37) in tRNA + diphosphate. Its function is as follows. Catalyzes the transfer of a dimethylallyl group onto the adenine at position 37 in tRNAs that read codons beginning with uridine, leading to the formation of N6-(dimethylallyl)adenosine (i(6)A). In Nitratidesulfovibrio vulgaris (strain ATCC 29579 / DSM 644 / CCUG 34227 / NCIMB 8303 / VKM B-1760 / Hildenborough) (Desulfovibrio vulgaris), this protein is tRNA dimethylallyltransferase.